A 110-amino-acid chain; its full sequence is Prothymosin alpha (110 aa).

Met-1 carries the post-translational modification N-acetylmethionine. Residues 1-110 are disordered; sequence MSDAAVDTSS…TKKQKTDEDD (110 aa). Ser-2 is modified (N-acetylserine; in Prothymosin alpha, N-terminally processed). A Phosphoserine modification is found at Ser-2. At Thr-8 the chain carries Phosphothreonine; by CK2. Phosphoserine is present on residues Ser-9 and Ser-10. Thr-13 and Thr-14 each carry phosphothreonine; by CK2. Residues 13-31 are compositionally biased toward basic and acidic residues; it reads TTKDLKEKKEVVEEAENGR. Residue Lys-15 is modified to N6-acetyllysine; alternate. Lys-15 is modified (N6-succinyllysine; alternate). A compositionally biased stretch (low complexity) spans 32-41; sequence EAPANGNANE. Acidic residues predominate over residues 42-83; it reads ENGEQEADNEVDEEEEEGGEEEEEEEEGDGEEEDGDEDEEAE. Basic and acidic residues predominate over residues 100 to 110; it reads DTKKQKTDEDD. Thr-101 bears the Phosphothreonine mark. The residue at position 102 (Lys-102) is an N6-acetyllysine; alternate. Lys-102 is covalently cross-linked (Glycyl lysine isopeptide (Lys-Gly) (interchain with G-Cter in SUMO2); alternate). Thr-106 is modified (phosphothreonine).

Belongs to the pro/parathymosin family. In terms of assembly, interacts with NUPR1; regulates apoptotic process. In terms of processing, covalently linked to a small RNA of about 20 nucleotides.

It localises to the nucleus. Functionally, prothymosin alpha may mediate immune function by conferring resistance to certain opportunistic infections. The chain is Prothymosin alpha (PTMA) from Bos taurus (Bovine).